Consider the following 150-residue polypeptide: Transcriptional repressor NrdR (150 aa).

Residues 3–34 fold into a zinc finger; sequence CPFCAFADSKVVDSRPDKEGSTIRRRRECESC. Residues 49 to 139 form the ATP-cone domain; sequence PLVIKKDGRR…VYRSFKDITE (91 aa).

It belongs to the NrdR family. The cofactor is Zn(2+).

Its function is as follows. Negatively regulates transcription of bacterial ribonucleotide reductase nrd genes and operons by binding to NrdR-boxes. This chain is Transcriptional repressor NrdR, found in Geotalea daltonii (strain DSM 22248 / JCM 15807 / FRC-32) (Geobacter daltonii).